Consider the following 2386-residue polypeptide: Protein kinase rad3 (2386 aa).

In terms of domain architecture, FAT spans 1386–1943 (TLGIVSLNCG…LWQLMATIKS (558 aa)). Residues 2052–2370 (FEDEVDIMNS…QIQELIKSAV (319 aa)) form the PI3K/PI4K catalytic domain. A G-loop region spans residues 2058-2064 (IMNSLQK). A catalytic loop region spans residues 2227–2235 (GLGDRHGEN). The interval 2247–2271 (HVDFNCLFDKGLTFEKPEKVPFRLT) is activation loop. The FATC domain occupies 2354 to 2386 (IPLSIEGQIQELIKSAVNPKNLVEMYIGWAAYF).

It belongs to the PI3/PI4-kinase family. ATM subfamily. In terms of assembly, interacts with crb2 (via BRCT domain). Interacts with chk1.

It localises to the nucleus. The catalysed reaction is L-seryl-[protein] + ATP = O-phospho-L-seryl-[protein] + ADP + H(+). The enzyme catalyses L-threonyl-[protein] + ATP = O-phospho-L-threonyl-[protein] + ADP + H(+). Functionally, serine/threonine kinase which activates checkpoint signaling upon genotoxic stresses. Involved in G2 arrest following DNA damage where it phosphorylates chk1. Phosphorylation of 'Thr-73' and 'Ser-80' of checkpoint mediator crb2 promotes its interaction with chk1. It is also involved in the dependence of mitosis on the completion of DNA replication. In Schizosaccharomyces pombe (strain 972 / ATCC 24843) (Fission yeast), this protein is Protein kinase rad3 (rad3).